The chain runs to 133 residues: ATP synthase epsilon chain, chloroplastic (133 aa).

The protein belongs to the ATPase epsilon chain family. F-type ATPases have 2 components, CF(1) - the catalytic core - and CF(0) - the membrane proton channel. CF(1) has five subunits: alpha(3), beta(3), gamma(1), delta(1), epsilon(1). CF(0) has three main subunits: a, b and c.

It is found in the plastid. The protein localises to the chloroplast thylakoid membrane. Its function is as follows. Produces ATP from ADP in the presence of a proton gradient across the membrane. This is ATP synthase epsilon chain, chloroplastic from Nephroselmis olivacea (Green alga).